Consider the following 683-residue polypeptide: DNA ligase (683 aa).

Residues Asp35–Asp39, Ser84–Leu85, and Glu115 contribute to the NAD(+) site. Lys117 functions as the N6-AMP-lysine intermediate in the catalytic mechanism. NAD(+)-binding residues include Arg138, Glu175, Lys293, and Lys317. Zn(2+)-binding residues include Cys411, Cys414, Cys429, and Cys435. A BRCT domain is found at Gln598–Gln683.

The protein belongs to the NAD-dependent DNA ligase family. LigA subfamily. Mg(2+) is required as a cofactor. Requires Mn(2+) as cofactor.

The enzyme catalyses NAD(+) + (deoxyribonucleotide)n-3'-hydroxyl + 5'-phospho-(deoxyribonucleotide)m = (deoxyribonucleotide)n+m + AMP + beta-nicotinamide D-nucleotide.. Its function is as follows. DNA ligase that catalyzes the formation of phosphodiester linkages between 5'-phosphoryl and 3'-hydroxyl groups in double-stranded DNA using NAD as a coenzyme and as the energy source for the reaction. It is essential for DNA replication and repair of damaged DNA. In Nitrosomonas eutropha (strain DSM 101675 / C91 / Nm57), this protein is DNA ligase.